The primary structure comprises 357 residues: Peptide chain release factor 1 (357 aa).

Gln-236 carries the N5-methylglutamine modification.

Belongs to the prokaryotic/mitochondrial release factor family. In terms of processing, methylated by PrmC. Methylation increases the termination efficiency of RF1.

It localises to the cytoplasm. Functionally, peptide chain release factor 1 directs the termination of translation in response to the peptide chain termination codons UAG and UAA. The chain is Peptide chain release factor 1 from Mycolicibacterium gilvum (strain PYR-GCK) (Mycobacterium gilvum (strain PYR-GCK)).